A 200-amino-acid chain; its full sequence is Peroxiredoxin (200 aa).

The 160-residue stretch at 6–165 folds into the Thioredoxin domain; sequence AQIGKPAPEF…TLRLVQAFQH (160 aa). C52 (cysteine sulfenic acid (-SOH) intermediate) is an active-site residue.

It belongs to the peroxiredoxin family. AhpC/Prx1 subfamily. Homodimer; disulfide-linked, upon oxidation.

It carries out the reaction a hydroperoxide + [thioredoxin]-dithiol = an alcohol + [thioredoxin]-disulfide + H2O. Its function is as follows. Thiol-specific peroxidase that catalyzes the reduction of hydrogen peroxide and organic hydroperoxides to water and alcohols, respectively. Plays a role in cell protection against oxidative stress by detoxifying peroxides and as sensor of hydrogen peroxide-mediated signaling events. This chain is Peroxiredoxin, found in Cynops pyrrhogaster (Japanese fire-bellied newt).